We begin with the raw amino-acid sequence, 438 residues long: Protein maelstrom 1 (438 aa).

The HMG box DNA-binding region spans 2-69 (APKKRNGFMT…LERTAKKERL (68 aa)). The segment at 374–438 (KEMGSRDLSP…NMGAGKKIAR (65 aa)) is disordered. Residues 381–391 (LSPSSSHQSVS) are compositionally biased toward polar residues.

It belongs to the maelstrom family.

Its subcellular location is the cytoplasm. The protein localises to the nucleus. Its function is as follows. Involved both in the piRNA and miRNA metabolic processes. As a component of the meiotic nuage, plays a central role during oogenesis by repressing transposable elements and preventing their mobilization, which is essential for the germline integrity. Repression of transposable elements is mediated via the piRNA metabolic process, which mediates the repression of transposable elements during meiosis by forming complexes composed of piRNAs and Piwi proteins and governs the repression of transposons. As a nuclear component, it is required for proper differentiation in the germline stem cell (GSC) lineage by repressing microRNA-7 (miR-7), thereby acting as an indirect regulator of bag-of-marbles (Bam). Acts by binding to the promoter of miR-7 gene and repressing its expression; miR-7 repression alleviates the Bam repression by miR-7, thereby allowing differentiation in the germline stem cell (GSC) lineage. In Drosophila persimilis (Fruit fly), this protein is Protein maelstrom 1 (mael1).